The sequence spans 147 residues: Deoxyuridine 5'-triphosphate nucleotidohydrolase (147 aa).

Arginine 24 lines the Mg(2+) pocket. Residues 68-70 (PRS), 82-85 (GVID), tyrosine 88, glycine 93, isoleucine 95, and arginine 111 each bind dUTP.

The protein belongs to the dUTPase family. Mg(2+) serves as cofactor.

The enzyme catalyses dUTP + H2O = dUMP + diphosphate + H(+). In terms of biological role, this enzyme is involved in nucleotide metabolism: it produces dUMP, the immediate precursor of thymidine nucleotides and it decreases the intracellular concentration of dUTP so that uracil cannot be incorporated into DNA. The chain is Deoxyuridine 5'-triphosphate nucleotidohydrolase (OPG046) from Homo sapiens (Human).